We begin with the raw amino-acid sequence, 467 residues long: Chromosomal replication initiator protein DnaA (467 aa).

Positions 1-90 are domain I, interacts with DnaA modulators; that stretch reads MSLSLWQQCL…KPVTQTPQAA (90 aa). The tract at residues 91–130 is domain II; sequence VTSNVAAPALVAQTQPQRAAPSTRSGWDNVPAPAEPTYRS. Residues 131 to 347 form a domain III, AAA+ region region; the sequence is NVNVKHTFDN…GALNRVIANA (217 aa). 4 residues coordinate ATP: Gly-175, Gly-177, Lys-178, and Thr-179. The domain IV, binds dsDNA stretch occupies residues 348–467; sequence NFTGRAITID…FSNLIRTLSS (120 aa).

Belongs to the DnaA family. Oligomerizes as a right-handed, spiral filament on DNA at oriC.

The protein resides in the cytoplasm. Its function is as follows. Plays an essential role in the initiation and regulation of chromosomal replication. ATP-DnaA binds to the origin of replication (oriC) to initiate formation of the DNA replication initiation complex once per cell cycle. Binds the DnaA box (a 9 base pair repeat at the origin) and separates the double-stranded (ds)DNA. Forms a right-handed helical filament on oriC DNA; dsDNA binds to the exterior of the filament while single-stranded (ss)DNA is stabiized in the filament's interior. The ATP-DnaA-oriC complex binds and stabilizes one strand of the AT-rich DNA unwinding element (DUE), permitting loading of DNA polymerase. After initiation quickly degrades to an ADP-DnaA complex that is not apt for DNA replication. Binds acidic phospholipids. In Shigella dysenteriae serotype 1 (strain Sd197), this protein is Chromosomal replication initiator protein DnaA.